We begin with the raw amino-acid sequence, 357 residues long: Mitogen-activated protein kinase kinase SIPKK (357 aa).

The region spanning 70–330 is the Protein kinase domain; it reads FEAVKVIGKG…ANELMRHPFI (261 aa). ATP is bound by residues 76–84 and lysine 99; that span reads IGKGNGGIV. Aspartate 192 serves as the catalytic Proton acceptor.

This sequence belongs to the protein kinase superfamily. STE Ser/Thr protein kinase family. MAP kinase kinase subfamily. As to quaternary structure, interacts with SIPK.

The catalysed reaction is L-tyrosyl-[protein] + ATP = O-phospho-L-tyrosyl-[protein] + ADP + H(+). It catalyses the reaction L-seryl-[protein] + ATP = O-phospho-L-seryl-[protein] + ADP + H(+). It carries out the reaction L-threonyl-[protein] + ATP = O-phospho-L-threonyl-[protein] + ADP + H(+). Its function is as follows. Phosphorylates myelin basic protein (MBP) in vitro. May be involved in disease resistance. The sequence is that of Mitogen-activated protein kinase kinase SIPKK from Nicotiana tabacum (Common tobacco).